Reading from the N-terminus, the 297-residue chain is Cell division protein FtsQ (297 aa).

The Cytoplasmic portion of the chain corresponds to 1-33 (MRPLSFRRRTAQARPDPAPSRLSYRVQRLLLTP). Residues 34–54 (LFHALIRVGLPAFVLAFGVGW) form a helical membrane-spanning segment. Over 55–297 (LLQNQELRDE…IRGLTNDRIE (243 aa)) the chain is Periplasmic. The POTRA domain occupies 82-150 (FMVNAMSVSG…GILAIEIVER (69 aa)).

This sequence belongs to the FtsQ/DivIB family. FtsQ subfamily.

Its subcellular location is the cell inner membrane. Functionally, essential cell division protein. In Dinoroseobacter shibae (strain DSM 16493 / NCIMB 14021 / DFL 12), this protein is Cell division protein FtsQ.